The chain runs to 521 residues: Nitric oxide reductase transcription regulator NorR2 (521 aa).

The residue at position 56 (Asp56) is a 4-aspartylphosphate. The region spanning 193–422 is the Sigma-54 factor interaction domain; it reads IIGQSEAIAN…LEHVISRAAL (230 aa). ATP is bound by residues 221–228 and 293–302; these read GETGVGKE and EVGELPLAIQ. A DNA-binding region (H-T-H motif) is located at residues 497-516; the sequence is WAQAARQLGIDASNLHKLAR.

It functions in the pathway nitrogen metabolism; nitrate reduction (denitrification) [regulation]. Required for the nitric oxide (NO) induced expression of NO reductase. Not required for expression of 2 other pathway members, nitrate reductase (nirS) and nitrous oxide reductase (nosZ). This is Nitric oxide reductase transcription regulator NorR2 (norR2) from Cupriavidus necator (strain ATCC 17699 / DSM 428 / KCTC 22496 / NCIMB 10442 / H16 / Stanier 337) (Ralstonia eutropha).